The sequence spans 226 residues: PtdIns3K complex I subunit atg38 (226 aa).

Residue serine 2 is modified to N-acetylserine. 2 coiled-coil regions span residues 52 to 85 (DVTQAIDLLKQDITAKIQELELLIEKQSSEENNI) and 182 to 209 (FKEYGMKIDEITKENKKLANEIGRLRER).

The protein belongs to the ATG38 family. Homodimer. Component of the autophagy-specific VPS34 PI3-kinase complex I composed of VPS15, VPS30, VPS34, ATG14 and an ATG38 homodimer. Interacts directly with ATG14 and VPS34.

The protein resides in the cytoplasm. It localises to the preautophagosomal structure membrane. Functionally, autophagy-related protein required for cytoplasm to vacuole transport (Cvt) and autophagy as a part of the autophagy-specific VPS34 PI3-kinase complex I. This complex is essential to recruit the ATG8-phosphatidylinositol conjugate and the ATG12-ATG5 conjugate to the pre-autophagosomal structure. ATG38 is required for the integrity of the active PI3-kinase complex I by maintaining an association between VPS15-VPS34 and ATG14-VPS30 subcomplexes. The sequence is that of PtdIns3K complex I subunit atg38 from Saccharomyces cerevisiae (strain ATCC 204508 / S288c) (Baker's yeast).